Consider the following 261-residue polypeptide: Carboxy-terminal domain RNA polymerase II polypeptide A small phosphatase 1 (261 aa).

Methionine 1 bears the N-acetylmethionine mark. The segment covering 1–10 (MDSSAVITQI) has biased composition (polar residues). Residues 1 to 33 (MDSSAVITQISKEEARGPLRGKGDQKSAASQKP) form a disordered region. A compositionally biased stretch (basic and acidic residues) spans 11–25 (SKEEARGPLRGKGDQ). Residues 86–244 (QDSDKICVVI…HDLLPFFEQL (159 aa)) form the FCP1 homology domain. Residue aspartate 96 is the 4-aspartylphosphate intermediate of the active site. Aspartate 96, aspartate 98, and asparagine 207 together coordinate Mg(2+). The Proton donor role is filled by aspartate 98.

Monomer. Interacts with GTF2F1. Interacts with REST. The cofactor is Mg(2+). In terms of tissue distribution, expression is restricted to non-neuronal tissues. Highest expression in skeletal muscle, spleen, lung and placenta.

It is found in the nucleus. The catalysed reaction is O-phospho-L-seryl-[protein] + H2O = L-seryl-[protein] + phosphate. It catalyses the reaction O-phospho-L-threonyl-[protein] + H2O = L-threonyl-[protein] + phosphate. Its activity is regulated as follows. Stimulated by GTF2F1. Inhibited by beryllofluoride anions. Its function is as follows. Preferentially catalyzes the dephosphorylation of 'Ser-5' within the tandem 7 residue repeats in the C-terminal domain (CTD) of the largest RNA polymerase II subunit POLR2A. Negatively regulates RNA polymerase II transcription, possibly by controlling the transition from initiation/capping to processive transcript elongation. Recruited by REST to neuronal genes that contain RE-1 elements, leading to neuronal gene silencing in non-neuronal cells. This chain is Carboxy-terminal domain RNA polymerase II polypeptide A small phosphatase 1 (CTDSP1), found in Homo sapiens (Human).